A 690-amino-acid chain; its full sequence is uncharacterized protein (690 aa).

This is an uncharacterized protein from Acanthamoeba polyphaga mimivirus (APMV).